Here is a 167-residue protein sequence, read N- to C-terminus: 3-isopropylmalate dehydratase small subunit (167 aa).

This sequence belongs to the LeuD family. LeuD type 2 subfamily. As to quaternary structure, heterodimer of LeuC and LeuD.

It catalyses the reaction (2R,3S)-3-isopropylmalate = (2S)-2-isopropylmalate. Its pathway is amino-acid biosynthesis; L-leucine biosynthesis; L-leucine from 3-methyl-2-oxobutanoate: step 2/4. In terms of biological role, catalyzes the isomerization between 2-isopropylmalate and 3-isopropylmalate, via the formation of 2-isopropylmaleate. This Nitratidesulfovibrio vulgaris (strain ATCC 29579 / DSM 644 / CCUG 34227 / NCIMB 8303 / VKM B-1760 / Hildenborough) (Desulfovibrio vulgaris) protein is 3-isopropylmalate dehydratase small subunit.